A 113-amino-acid chain; its full sequence is Stigma/stylar cysteine-rich adhesin (113 aa).

Positions 1–22 (MARSSAVCFLLLLAFLIGTASA) are cleaved as a signal peptide. 4 disulfide bridges follow: C25–C72, C35–C49, C50–C95, and C70–C109.

It belongs to the plant LTP family. As to expression, highly expressed in style and stigma, abundant in young leaves and petals, and low expression in young anthers at pollen mother cell stage with an active tapetum. Not expressed in mature leaves or in pollen grains or tubes. Found in the stylar transmitting tract epidermis and in the stylar extracellular matrix.

In terms of biological role, acts as an adhesive agent between the pollen tube wall and the stylar transmitting tract epidermis. Binds a stylar pectin in a pH-dependent manner. Enhances activity of chemocyanin, a diffusible chemotropic factor. The sequence is that of Stigma/stylar cysteine-rich adhesin (SCA) from Lilium longiflorum (Trumpet lily).